Reading from the N-terminus, the 431-residue chain is Adenylosuccinate synthetase (431 aa).

Residues G15 to K21 and G43 to T45 each bind GTP. D16 (proton acceptor) is an active-site residue. D16 and G43 together coordinate Mg(2+). IMP is bound by residues D16–K19, N41–H44, T135, R149, N227, T242, and R306. The active-site Proton donor is the H44. A substrate-binding site is contributed by V302–R308. Residues R308, K334–D336, and G416–G418 each bind GTP.

It belongs to the adenylosuccinate synthetase family. In terms of assembly, homodimer. Requires Mg(2+) as cofactor.

It localises to the cytoplasm. The enzyme catalyses IMP + L-aspartate + GTP = N(6)-(1,2-dicarboxyethyl)-AMP + GDP + phosphate + 2 H(+). It participates in purine metabolism; AMP biosynthesis via de novo pathway; AMP from IMP: step 1/2. Its function is as follows. Plays an important role in the de novo pathway and in the salvage pathway of purine nucleotide biosynthesis. Catalyzes the first committed step in the biosynthesis of AMP from IMP. The polypeptide is Adenylosuccinate synthetase (Monosiga brevicollis (Choanoflagellate)).